We begin with the raw amino-acid sequence, 772 residues long: Cadherin-19 (772 aa).

The signal sequence occupies residues 1–21; the sequence is MNCYLLLRFMLGIPLLWPCLG. Positions 22–43 are excised as a propeptide; sequence ATENSQTKKVKQPVRSHLRVKR. Cadherin domains lie at 44–148, 149–256, 257–370, 371–470, and 470–581; these read GWVW…EPKF, LDEP…KPIF, KESL…PPLF, LLPY…APEF, and FSQY…STQT. Residues 44–596 lie on the Extracellular side of the membrane; sequence GWVWNQFFVP…LVLSMGFKTE (553 aa). N57 and N74 each carry an N-linked (GlcNAc...) asparagine glycan. 6 N-linked (GlcNAc...) asparagine glycosylation sites follow: N419, N437, N508, N515, N516, and N534. A helical membrane pass occupies residues 597–617; the sequence is VIIAILICIMIIFGFIFLTLG. Residues 618-772 lie on the Cytoplasmic side of the membrane; the sequence is LKQRRKQILF…MFGSAVQSNN (155 aa).

In terms of tissue distribution, expressed in many tissues, with the exception of uterus.

It localises to the cell membrane. Cadherins are calcium-dependent cell adhesion proteins. They preferentially interact with themselves in a homophilic manner in connecting cells; cadherins may thus contribute to the sorting of heterogeneous cell types. The sequence is that of Cadherin-19 (CDH19) from Homo sapiens (Human).